Reading from the N-terminus, the 429-residue chain is GTPase Obg (429 aa).

The region spanning 1-158 (MFVDQVKIYV…RNVQLELKVL (158 aa)) is the Obg domain. Positions 124–145 (RGNKRFATPANPAPELSENGEP) are disordered. In terms of domain architecture, OBG-type G spans 159–329 (ADVGLVGFPS…LLLAIADKLE (171 aa)). GTP is bound by residues 165–172 (GFPSVGKS), 190–194 (FTTIV), 212–215 (DLPG), 282–285 (NKMD), and 310–312 (SAV). 2 residues coordinate Mg(2+): serine 172 and threonine 192. The region spanning 351-429 (KYIAEEPDFE…LLDYEFEFMD (79 aa)) is the OCT domain.

This sequence belongs to the TRAFAC class OBG-HflX-like GTPase superfamily. OBG GTPase family. Monomer. Requires Mg(2+) as cofactor.

It localises to the cytoplasm. Its function is as follows. An essential GTPase which binds GTP, GDP and possibly (p)ppGpp with moderate affinity, with high nucleotide exchange rates and a fairly low GTP hydrolysis rate. Plays a role in control of the cell cycle, stress response, ribosome biogenesis and in those bacteria that undergo differentiation, in morphogenesis control. This Listeria welshimeri serovar 6b (strain ATCC 35897 / DSM 20650 / CCUG 15529 / CIP 8149 / NCTC 11857 / SLCC 5334 / V8) protein is GTPase Obg.